A 242-amino-acid polypeptide reads, in one-letter code: Large ribosomal subunit protein uL1 (242 aa).

This sequence belongs to the universal ribosomal protein uL1 family. As to quaternary structure, part of the 50S ribosomal subunit.

Functionally, binds directly to 23S rRNA. The L1 stalk is quite mobile in the ribosome, and is involved in E site tRNA release. Protein L1 is also a translational repressor protein, it controls the translation of the L11 operon by binding to its mRNA. The sequence is that of Large ribosomal subunit protein uL1 from Dictyoglomus turgidum (strain DSM 6724 / Z-1310).